The chain runs to 495 residues: Putative aldehyde dehydrogenase AldA (495 aa).

212–218 is an NAD(+) binding site; that stretch reads GKGSESG. Catalysis depends on residues E256 and C290.

This sequence belongs to the aldehyde dehydrogenase family.

The enzyme catalyses an aldehyde + NAD(+) + H2O = a carboxylate + NADH + 2 H(+). The polypeptide is Putative aldehyde dehydrogenase AldA (aldA) (Staphylococcus aureus (strain bovine RF122 / ET3-1)).